The sequence spans 208 residues: Ras-related protein Rab-6A (208 aa).

Residue Ser-2 is modified to N-acetylserine. The GTP site is built by Ser-23, Val-24, Gly-25, Lys-26, Thr-27, Ser-28, Asp-39, Asn-40, Tyr-42, and Thr-45. Residue Thr-27 coordinates Mg(2+). Residues 32–50 (RFMYDSFDNTYQATIGIDF) carry the Switch 1 motif. Mg(2+) contacts are provided by Thr-45 and Asp-68. The Switch 2 signature appears at 69–88 (TAGQERFRSLIPSYIRDSTV). GTP contacts are provided by Gly-71, Asn-126, Lys-127, Asp-129, Ser-156, Ala-157, and Lys-158. At Ser-184 the chain carries Phosphoserine. Residues Cys-206 and Cys-208 are each lipidated (S-geranylgeranyl cysteine). Position 208 is a cysteine methyl ester (Cys-208).

The protein belongs to the small GTPase superfamily. Rab family. Interacts with BICDL1; leads to its accumulation in the pericentrosomal region. Interacts with SCYL1BP1. Interacts with VSP52. Interacts with RABGAP1. Interacts with GCC2 (via its GRIP domain). Interacts with RAB6IP1 (via its RUN 1 domain). Interacts with TMF1. Interacts with CIMAP3. Interacts (GTP-bound) with APBA1/MINT1 isoform 3, also called Mint1_826, but not with isoform 1. Interacts with RIC1; the interaction is direct with a preference for RAB6A-GDP. Interacts with RGP1; the interaction is direct with a preference for RAB6A-GDP. In terms of assembly, interacts (GTP-bound) with DYNLRB1; the interaction is direct. Interacts with BICD1. Interacts with BICD2; the interaction is direct. Interacts (GTP-bound) with VPS13B. As to quaternary structure, interacts with BICD1. Interacts (GDP-bound) with DYNLRB1; the interaction is direct. Interacts (GTP-bound) with VPS13B. The cofactor is Mg(2+). Prenylated.

It localises to the golgi apparatus membrane. Its subcellular location is the cytoplasmic vesicle. The protein resides in the secretory vesicle. The protein localises to the acrosome membrane. The enzyme catalyses GTP + H2O = GDP + phosphate + H(+). Regulated by guanine nucleotide exchange factors (GEFs) which promote the exchange of bound GDP for free GTP. Regulated by GTPase activating proteins (GAPs) which increase the GTP hydrolysis activity. Inhibited by GDP dissociation inhibitors (GDIs). Functionally, the small GTPases Rab are key regulators of intracellular membrane trafficking, from the formation of transport vesicles to their fusion with membranes. Rabs cycle between an inactive GDP-bound form and an active GTP-bound form that is able to recruit to membranes different sets of downstream effectors directly responsible for vesicle formation, movement, tethering and fusion. RAB6A acts as a regulator of COPI-independent retrograde transport from the Golgi apparatus towards the endoplasmic reticulum (ER). Has a low GTPase activity. Recruits VPS13B to the Golgi membrane. Plays a role in neuron projection development. In Mus musculus (Mouse), this protein is Ras-related protein Rab-6A.